A 95-amino-acid polypeptide reads, in one-letter code: Aspartyl/glutamyl-tRNA(Asn/Gln) amidotransferase subunit C (95 aa).

It belongs to the GatC family. Heterotrimer of A, B and C subunits.

The catalysed reaction is L-glutamyl-tRNA(Gln) + L-glutamine + ATP + H2O = L-glutaminyl-tRNA(Gln) + L-glutamate + ADP + phosphate + H(+). It catalyses the reaction L-aspartyl-tRNA(Asn) + L-glutamine + ATP + H2O = L-asparaginyl-tRNA(Asn) + L-glutamate + ADP + phosphate + 2 H(+). Functionally, allows the formation of correctly charged Asn-tRNA(Asn) or Gln-tRNA(Gln) through the transamidation of misacylated Asp-tRNA(Asn) or Glu-tRNA(Gln) in organisms which lack either or both of asparaginyl-tRNA or glutaminyl-tRNA synthetases. The reaction takes place in the presence of glutamine and ATP through an activated phospho-Asp-tRNA(Asn) or phospho-Glu-tRNA(Gln). This Halothermothrix orenii (strain H 168 / OCM 544 / DSM 9562) protein is Aspartyl/glutamyl-tRNA(Asn/Gln) amidotransferase subunit C.